Consider the following 329-residue polypeptide: 4-hydroxythreonine-4-phosphate dehydrogenase (329 aa).

Residues histidine 136 and threonine 137 each coordinate substrate. Residues histidine 166, histidine 211, and histidine 266 each coordinate a divalent metal cation. Substrate is bound by residues lysine 274, asparagine 283, and arginine 292.

This sequence belongs to the PdxA family. As to quaternary structure, homodimer. Zn(2+) serves as cofactor. It depends on Mg(2+) as a cofactor. Requires Co(2+) as cofactor.

It localises to the cytoplasm. It carries out the reaction 4-(phosphooxy)-L-threonine + NAD(+) = 3-amino-2-oxopropyl phosphate + CO2 + NADH. It functions in the pathway cofactor biosynthesis; pyridoxine 5'-phosphate biosynthesis; pyridoxine 5'-phosphate from D-erythrose 4-phosphate: step 4/5. In terms of biological role, catalyzes the NAD(P)-dependent oxidation of 4-(phosphooxy)-L-threonine (HTP) into 2-amino-3-oxo-4-(phosphooxy)butyric acid which spontaneously decarboxylates to form 3-amino-2-oxopropyl phosphate (AHAP). This Salmonella typhi protein is 4-hydroxythreonine-4-phosphate dehydrogenase.